A 367-amino-acid polypeptide reads, in one-letter code: THO complex subunit 6 (367 aa).

7 WD repeats span residues 23-67 (IETR…SQSA), 88-129 (AHEG…ESDV), 157-196 (SPMPEINAMSVDPQSGSVFTAAGDSCAYCWDVESGKIKMT), 199-240 (GHSD…KVIG), 243-283 (DKKS…CVQT), 285-322 (PIPAHVQDVMFDEKQILTVGAEPLLRRFDLNGALLSQI), and 324-363 (CAPCSVFSISLHPAGVVAVGGYGGIVDVISQFGSHLCTFR).

The protein belongs to the WD repeat THOC6 family. As to quaternary structure, component of the THO complex, which is composed of THO1, THO2, THO3, THO5, THO6 and THO7. Interacts with ABI5, DDB1A and DWA2.

It is found in the nucleus. The protein operates within protein modification; protein ubiquitination. Its function is as follows. Acts as a component of the THO subcomplex of the TREX complex which is thought to couple mRNA transcription, processing and nuclear export. In terms of biological role, component of the CUL4-RBX1-DDB1-DWA1/DWA2 E3 ubiquitin-protein ligase complex that acts as a negative regulator in abscisic acid (ABA) signaling. May function as the substrate recognition module within this complex leading to ABI5 degradation. Functionally redundant with DWA2. This Arabidopsis thaliana (Mouse-ear cress) protein is THO complex subunit 6 (THO6).